Consider the following 456-residue polypeptide: uncharacterized protein (456 aa).

The protein belongs to the herpesviridae UL49 family.

This is an uncharacterized protein from Equus caballus (Horse).